Here is a 475-residue protein sequence, read N- to C-terminus: 3-isopropylmalate dehydratase large subunit (475 aa).

[4Fe-4S] cluster contacts are provided by C347, C407, and C410. The tract at residues 418-442 (LAPGERSASTSNRNFEGRQGKGGRT) is disordered.

The protein belongs to the aconitase/IPM isomerase family. LeuC type 1 subfamily. As to quaternary structure, heterodimer of LeuC and LeuD. [4Fe-4S] cluster is required as a cofactor.

It catalyses the reaction (2R,3S)-3-isopropylmalate = (2S)-2-isopropylmalate. It functions in the pathway amino-acid biosynthesis; L-leucine biosynthesis; L-leucine from 3-methyl-2-oxobutanoate: step 2/4. Functionally, catalyzes the isomerization between 2-isopropylmalate and 3-isopropylmalate, via the formation of 2-isopropylmaleate. The sequence is that of 3-isopropylmalate dehydratase large subunit from Streptomyces griseus subsp. griseus (strain JCM 4626 / CBS 651.72 / NBRC 13350 / KCC S-0626 / ISP 5235).